Consider the following 1710-residue polypeptide: Chromodomain-helicase-DNA-binding protein 1 (1710 aa).

Basic and acidic residues predominate over residues 1–10 (MNGHSDEESV). Residues 1 to 252 (MNGHSDEESV…KEDEEMKTDS (252 aa)) are disordered. Residues 35 to 63 (SSGSSSDGSSSQSGSSDSDSGSESGSQSE) show a composition bias toward low complexity. Positions 67–85 (DTSRENKVQAKPPKVDGAE) are enriched in basic and acidic residues. The span at 105–121 (QQQQQQQQQHQASSNSG) shows a compositional bias: low complexity. A compositionally biased stretch (acidic residues) spans 122–136 (SEEDSSSSEDSDDSS). Low complexity predominate over residues 152–163 (SGSGSPSQSGSD). Positions 187–210 (KVKSRKPQNRSKSKNGKKILGQKK) are enriched in basic residues. 2 positions are modified to phosphoserine: serine 215 and serine 216. A compositionally biased stretch (acidic residues) spans 215 to 226 (SSEEDDDEEDYD). Threonine 237 carries the post-translational modification Phosphothreonine. At serine 241 the chain carries Phosphoserine. A Phosphothreonine modification is found at threonine 250. Residue serine 252 is modified to Phosphoserine. Chromo domains are found at residues 272-364 (ETIE…RWLK) and 389-452 (QIVE…TPFK). A Phosphoserine modification is found at serine 471. The 171-residue stretch at 493 to 663 (AHSWCKGNSC…WSLLHFIMPE (171 aa)) folds into the Helicase ATP-binding domain. 506–513 (DEMGLGKT) contacts ATP. A DEAH box motif is present at residues 614-617 (DEAH). The Helicase C-terminal domain maps to 792–943 (LLDKLLIRLR…HLVIQRMDTT (152 aa)). 8 positions are modified to phosphoserine: serine 1025, serine 1040, serine 1081, serine 1085, serine 1096, serine 1098, serine 1100, and serine 1102. A disordered region spans residues 1080–1120 (ISFNGSEGRRSRSRRYSGSDSDSISEGKRPKKRGRPRTIPR). The segment covering 1108–1117 (RPKKRGRPRT) has biased composition (basic residues). Phosphoserine is present on serine 1161. 2 disordered regions span residues 1321–1408 (EALS…ESEE) and 1502–1710 (KKRQ…SRKT). Basic residues predominate over residues 1329 to 1345 (SKRRKARAKKNKAMKSI). Residues serine 1353, serine 1355, serine 1356, serine 1360, serine 1363, serine 1371, and serine 1373 each carry the phosphoserine modification. Positions 1370-1379 (LSESKSDGRE) are enriched in basic and acidic residues. The segment at 1409–1511 (LDQKTFSICK…KKRQESQQNS (103 aa)) is CHD1 helical C-terminal domain (CHCT). Over residues 1507 to 1516 (SQQNSDQNSN) the composition is skewed to low complexity. Composition is skewed to basic and acidic residues over residues 1523–1573 (RNPD…DSRK) and 1582–1670 (GKDH…DHRA). Residue serine 1622 is modified to Phosphoserine. A run of 3 repeats spans residues 1628-1632 (HSDHR), 1634-1638 (HSDHR), and 1640-1644 (HSDHR). Residues 1628-1644 (HSDHRSHSDHRLHSDHR) are 3 X 5 AA repeats of H-S-D-H-R. A phosphoserine mark is found at serine 1677, arginine 1688, and serine 1689. The span at 1690 to 1701 (PFEHSVEHKSTP) shows a compositional bias: basic and acidic residues.

The protein belongs to the SNF2/RAD54 helicase family. Component of the SAGA complex. Interacts with BCLAF1, NCoR, SRP20 and SAFB. Specifically interacts with methylated H3K4me2 and H3K4me3. Interacts with the FACT complex, the PAF complex and the U2 snRNP. Interacts directly with PAF1, SFA3A1, SFA3A2, SFA3A3, SNF2 and SSRP1. In terms of tissue distribution, expressed in many tissues including in the brain, where the highest level of expression is found in the cerebellum and basal ganglia.

It is found in the nucleus. The protein localises to the cytoplasm. It catalyses the reaction ATP + H2O = ADP + phosphate + H(+). In terms of biological role, ATP-dependent chromatin-remodeling factor which functions as substrate recognition component of the transcription regulatory histone acetylation (HAT) complex SAGA. Regulates polymerase II transcription. Also required for efficient transcription by RNA polymerase I, and more specifically the polymerase I transcription termination step. Regulates negatively DNA replication. Not only involved in transcription-related chromatin-remodeling, but also required to maintain a specific chromatin configuration across the genome. Is also associated with histone deacetylase (HDAC) activity. Required for the bridging of SNF2, the FACT complex, the PAF complex as well as the U2 snRNP complex to H3K4me3. Functions to modulate the efficiency of pre-mRNA splicing in part through physical bridging of spliceosomal components to H3K4me3. Required for maintaining open chromatin and pluripotency in embryonic stem cells. The chain is Chromodomain-helicase-DNA-binding protein 1 from Homo sapiens (Human).